The chain runs to 273 residues: Putative pyruvate, phosphate dikinase regulatory protein (273 aa).

149-156 (GPSRTSKT) contributes to the ADP binding site.

This sequence belongs to the pyruvate, phosphate/water dikinase regulatory protein family. PDRP subfamily.

The enzyme catalyses N(tele)-phospho-L-histidyl/L-threonyl-[pyruvate, phosphate dikinase] + ADP = N(tele)-phospho-L-histidyl/O-phospho-L-threonyl-[pyruvate, phosphate dikinase] + AMP + H(+). It carries out the reaction N(tele)-phospho-L-histidyl/O-phospho-L-threonyl-[pyruvate, phosphate dikinase] + phosphate + H(+) = N(tele)-phospho-L-histidyl/L-threonyl-[pyruvate, phosphate dikinase] + diphosphate. Its function is as follows. Bifunctional serine/threonine kinase and phosphorylase involved in the regulation of the pyruvate, phosphate dikinase (PPDK) by catalyzing its phosphorylation/dephosphorylation. In Rickettsia felis (strain ATCC VR-1525 / URRWXCal2) (Rickettsia azadi), this protein is Putative pyruvate, phosphate dikinase regulatory protein.